We begin with the raw amino-acid sequence, 349 residues long: 2-oxoglutarate-Fe(II) type oxidoreductase ppzD (349 aa).

The Fe2OG dioxygenase domain maps to 200-311 (NTSELRLNHY…RYSVAYFGKP (112 aa)). Positions 227, 229, and 287 each coordinate Fe cation. R302 lines the 2-oxoglutarate pocket.

This sequence belongs to the iron/ascorbate-dependent oxidoreductase family. Fe(2+) serves as cofactor.

The catalysed reaction is L-proline + 2-oxoglutarate + O2 = trans-4-hydroxy-L-proline + succinate + CO2. It carries out the reaction L-proline + 2-oxoglutarate + O2 = trans-3-hydroxy-L-proline + succinate + CO2. It catalyses the reaction D-proline + 2-oxoglutarate + O2 = cis-4-hydroxy-D-proline + succinate + CO2. It participates in secondary metabolite biosynthesis. 2-oxoglutarate-Fe(II) type oxidoreductase; part of the gene cluster that mediates the biosynthesis of pyrrolopyrazines, secondary metabolites showing insecticidal activity. Within the pathway, ppzD converts L-proline into trans-4-hydroxy-L-proline as a major product, yielding a key precursor for peramine biosynthesis. PpzD is also able to convert L-proline into trans-3-hydroxy-L-proline. The single multifunctional NRPS ppzA is sufficient to produce peramine via condensation of 1-pyrroline-5-carboxylate and arginine, N-methylation of the alpha-amino group of arginine and reduction of the thioester and the cyclization to form an iminium ion resulting in release from the peptide synthetase. Deprotonation of this intermediate and oxidation of the pyrroline ring would give rise to peramine. In Epichloe species that produce only peramine, the peramine synthetase gene is not localized in a gene cluster, in contrast to Metarhizium species that contain additional pyrrolopyrazine biosynthesis genes. The 2-oxoglutarate-Fe(II) type oxidoreductase ppzC hydroxylates peramine to yield the newly identified compound 8-hydroxyperamine whereas ppzD converts L-proline into trans-4-hydroxy-L-proline, a precursor of peramine biosynthesis. This chain is 2-oxoglutarate-Fe(II) type oxidoreductase ppzD (ppzD), found in Metarhizium majus (strain ARSEF 297).